The primary structure comprises 130 residues: Small ribosomal subunit protein uS8 (130 aa).

It belongs to the universal ribosomal protein uS8 family. Part of the 30S ribosomal subunit. Contacts proteins S5 and S12.

Functionally, one of the primary rRNA binding proteins, it binds directly to 16S rRNA central domain where it helps coordinate assembly of the platform of the 30S subunit. The polypeptide is Small ribosomal subunit protein uS8 (Buchnera aphidicola subsp. Cinara cedri (strain Cc)).